A 523-amino-acid chain; its full sequence is Melanoma-associated antigen E2 (523 aa).

MAGE domains follow at residues 88–288 (LEDR…YNKA) and 311–502 (MNDK…YREA).

In Homo sapiens (Human), this protein is Melanoma-associated antigen E2 (MAGEE2).